The sequence spans 187 residues: UPF0340 protein str1894 (187 aa).

It belongs to the UPF0340 family.

The polypeptide is UPF0340 protein str1894 (Streptococcus thermophilus (strain CNRZ 1066)).